Consider the following 216-residue polypeptide: Putative flagellar filament outer layer-like protein (216 aa).

The tract at residues 1–22 (MFAQDAAQTGEQTTQNQGENGN) is disordered. Positions 8-22 (QTGEQTTQNQGENGN) are enriched in low complexity.

It localises to the periplasmic flagellum. The protein localises to the periplasm. Its function is as follows. Might be part of the flagella. The chain is Putative flagellar filament outer layer-like protein (flaAL) from Brachyspira hyodysenteriae (strain ATCC 49526 / WA1).